We begin with the raw amino-acid sequence, 232 residues long: 5'-methylthioadenosine/S-adenosylhomocysteine nucleosidase (232 aa).

The active-site Proton acceptor is Glu12. Substrate contacts are provided by residues Gly78, Ile152, and 173–174; that span reads ME. The active-site Proton donor is the Asp197.

It belongs to the PNP/UDP phosphorylase family. MtnN subfamily. As to quaternary structure, homodimer.

The catalysed reaction is S-adenosyl-L-homocysteine + H2O = S-(5-deoxy-D-ribos-5-yl)-L-homocysteine + adenine. It catalyses the reaction S-methyl-5'-thioadenosine + H2O = 5-(methylsulfanyl)-D-ribose + adenine. It carries out the reaction 5'-deoxyadenosine + H2O = 5-deoxy-D-ribose + adenine. It participates in amino-acid biosynthesis; L-methionine biosynthesis via salvage pathway; S-methyl-5-thio-alpha-D-ribose 1-phosphate from S-methyl-5'-thioadenosine (hydrolase route): step 1/2. Its function is as follows. Catalyzes the irreversible cleavage of the glycosidic bond in both 5'-methylthioadenosine (MTA) and S-adenosylhomocysteine (SAH/AdoHcy) to adenine and the corresponding thioribose, 5'-methylthioribose and S-ribosylhomocysteine, respectively. Also cleaves 5'-deoxyadenosine, a toxic by-product of radical S-adenosylmethionine (SAM) enzymes, into 5-deoxyribose and adenine. Thus, is required for in vivo function of the radical SAM enzymes biotin synthase and lipoic acid synthase, that are inhibited by 5'-deoxyadenosine accumulation. The polypeptide is 5'-methylthioadenosine/S-adenosylhomocysteine nucleosidase (Citrobacter koseri (strain ATCC BAA-895 / CDC 4225-83 / SGSC4696)).